Here is a 589-residue protein sequence, read N- to C-terminus: Proton pump-interactor 2 (589 aa).

Residues 205–245 (EDSLAEKEASINRVKSMAVELNEVKKELDAITWKINHLSDK) adopt a coiled-coil conformation. 4 stretches are compositionally biased toward basic and acidic residues: residues 370 to 383 (KGGE…REDS), 395 to 408 (TDKR…KAMD), 426 to 450 (VYEK…REEQ), and 504 to 534 (ESDH…KERS). Disordered stretches follow at residues 370–450 (KGGE…REEQ) and 485–534 (KECE…KERS). The stretch at 431 to 500 (KKEEEEVDEE…AKKKAAANSS (70 aa)) forms a coiled coil. Residues 568 to 588 (WVWGLSSAALAVALFLVVLLL) traverse the membrane as a helical segment.

The protein belongs to the plant Proton pump-interactor protein family. In terms of tissue distribution, expressed in seedlings and flowers.

It is found in the cell membrane. The protein resides in the endoplasmic reticulum membrane. In terms of biological role, may regulate plasma membrane ATPase activity. In Arabidopsis thaliana (Mouse-ear cress), this protein is Proton pump-interactor 2 (PPI2).